The primary structure comprises 124 residues: UPF0102 protein Blon_1698/BLIJ_1758 (124 aa).

Belongs to the UPF0102 family.

This chain is UPF0102 protein Blon_1698/BLIJ_1758, found in Bifidobacterium longum subsp. infantis (strain ATCC 15697 / DSM 20088 / JCM 1222 / NCTC 11817 / S12).